A 552-amino-acid polypeptide reads, in one-letter code: Probable protein kinase UbiB (552 aa).

Residues 121–504 enclose the Protein kinase domain; the sequence is HFDTVPLASA…QGLQRRVVNA (384 aa). ATP contacts are provided by residues 127 to 135 and lysine 149; that span reads LASASISQV. Aspartate 284 serves as the catalytic Proton acceptor. 2 helical membrane passes run 501 to 521 and 526 to 546; these read VVNA…YGLH and YLGA…LALF.

It belongs to the ABC1 family. UbiB subfamily.

It localises to the cell inner membrane. Its pathway is cofactor biosynthesis; ubiquinone biosynthesis [regulation]. Is probably a protein kinase regulator of UbiI activity which is involved in aerobic coenzyme Q (ubiquinone) biosynthesis. This is Probable protein kinase UbiB from Xylella fastidiosa (strain 9a5c).